Reading from the N-terminus, the 65-residue chain is Orally active insecticidal peptide-3 (65 aa).

The signal sequence occupies residues 1–21; the sequence is MKTSVLFAILGLALLFCLSFG. Residues 22–29 constitute a propeptide that is removed on maturation; that stretch reads VELEETGR. Cystine bridges form between cysteine 31-cysteine 46, cysteine 38-cysteine 51, and cysteine 45-cysteine 58. Proline 62 is subject to Proline amide.

It belongs to the neurotoxin 10 (Hwtx-1) family. 46 (Jztx-7/10/12) subfamily. As to expression, expressed by the venom gland.

The protein resides in the secreted. Its function is as follows. Probable ion channel inhibitor. Shows insecticidal activity when injected into mealworms. The protein is Orally active insecticidal peptide-3 of Selenotypus plumipes (Australian featherleg tarantula).